The following is a 443-amino-acid chain: Serine transporter (443 aa).

11 helical membrane passes run 38-60 (TGWVIMSIGMAIGAGIVFLPVQV), 65-87 (LWVFLLSSVIGYPAMYLFQRLFI), 111-131 (WGILLGALYFVMLVIWMFVYS), 150-170 (GLLSDSPFYGLVLICILVAIS), 183-203 (GMVLTKLLVVAALGVSMVGMW), 215-235 (GLLVKNAIITLPFTLTSILFI), 265-285 (IAFGILFIIVFFYAVSFTLAM), 319-339 (VSVILNIFAVMTAFFGVYLGF), 368-388 (GIMIFAILLAWSAIVLNAPVL), 390-410 (FTSICSPIFGLVGCLIPAWLV), and 422-442 (MSLYLIIVTGLLLCVSPFLAF).

The protein belongs to the amino acid/polyamine transporter 2 family. SdaC/TdcC subfamily.

The protein resides in the cell inner membrane. Its function is as follows. Transports both D- and L-serine; allows growth of strain CFT073 cells normally unable to transport D-serine on that substrate. Transport relies on the H(+) gradient and is not competed by L-threonine. May play a role in L-cysteine detoxification. The polypeptide is Serine transporter (Escherichia coli O157:H7).